A 488-amino-acid polypeptide reads, in one-letter code: Katanin p60 ATPase-containing subunit A-like 1 (488 aa).

Position 1 is an N-acetylmethionine (M1). Residues 128–179 (GAGARGLVGRAHQISKSDKAASRDKDYRARGRDDKARKNMQDGASDGEIPKF) form a disordered region. The segment covering 142-167 (SKSDKAASRDKDYRARGRDDKARKNM) has biased composition (basic and acidic residues). Position 172 is a phosphoserine (S172). Residue 246 to 253 (GPPGTGKT) coordinates ATP.

This sequence belongs to the AAA ATPase family. Katanin p60 subunit A1 subfamily. A-like 1 sub-subfamily. In terms of assembly, interacts with KATNB1 and KATNBL1.

It is found in the cytoplasm. It localises to the cytoskeleton. Its subcellular location is the spindle pole. The protein resides in the spindle. It carries out the reaction n ATP + n H2O + a microtubule = n ADP + n phosphate + (n+1) alpha/beta tubulin heterodimers.. Its function is as follows. Regulates microtubule dynamics in Sertoli cells, a process that is essential for spermiogenesis and male fertility. Severs microtubules in an ATP-dependent manner, promoting rapid reorganization of cellular microtubule arrays. Has microtubule-severing activity in vitro. This is Katanin p60 ATPase-containing subunit A-like 1 (Katnal1) from Rattus norvegicus (Rat).